The chain runs to 179 residues: Large ribosomal subunit protein uL5 (179 aa).

This sequence belongs to the universal ribosomal protein uL5 family. Part of the 50S ribosomal subunit; part of the 5S rRNA/L5/L18/L25 subcomplex. Contacts the 5S rRNA and the P site tRNA. Forms a bridge to the 30S subunit in the 70S ribosome.

In terms of biological role, this is one of the proteins that bind and probably mediate the attachment of the 5S RNA into the large ribosomal subunit, where it forms part of the central protuberance. In the 70S ribosome it contacts protein S13 of the 30S subunit (bridge B1b), connecting the 2 subunits; this bridge is implicated in subunit movement. Contacts the P site tRNA; the 5S rRNA and some of its associated proteins might help stabilize positioning of ribosome-bound tRNAs. The sequence is that of Large ribosomal subunit protein uL5 from Shewanella frigidimarina (strain NCIMB 400).